The following is a 274-amino-acid chain: Nitrogenase iron protein (274 aa).

Residue 8–15 (GKGGIGKS) coordinates ATP. Residue C94 coordinates [4Fe-4S] cluster. R97 bears the ADP-ribosylarginine; by dinitrogenase reductase ADP-ribosyltransferase mark. C131 contributes to the [4Fe-4S] cluster binding site.

It belongs to the NifH/BchL/ChlL family. In terms of assembly, homodimer. [4Fe-4S] cluster serves as cofactor. The reversible ADP-ribosylation of Arg-97 inactivates the nitrogenase reductase and regulates nitrogenase activity.

It catalyses the reaction N2 + 8 reduced [2Fe-2S]-[ferredoxin] + 16 ATP + 16 H2O = H2 + 8 oxidized [2Fe-2S]-[ferredoxin] + 2 NH4(+) + 16 ADP + 16 phosphate + 6 H(+). Functionally, the key enzymatic reactions in nitrogen fixation are catalyzed by the nitrogenase complex, which has 2 components: the iron protein and the molybdenum-iron protein. This Chlorobium phaeovibrioides (strain DSM 265 / 1930) (Prosthecochloris vibrioformis (strain DSM 265)) protein is Nitrogenase iron protein.